The following is a 579-amino-acid chain: UvrABC system protein C (579 aa).

Residues 12-89 form the GIY-YIG domain; the sequence is DATGVYIFRD…IKRYRPPYNV (78 aa). Residues 193–228 enclose the UVR domain; that stretch reads QEVIEVLEEEMKEASERLEFERAARIRDQIESIREV.

The protein belongs to the UvrC family. In terms of assembly, interacts with UvrB in an incision complex.

Its subcellular location is the cytoplasm. The UvrABC repair system catalyzes the recognition and processing of DNA lesions. UvrC both incises the 5' and 3' sides of the lesion. The N-terminal half is responsible for the 3' incision and the C-terminal half is responsible for the 5' incision. The chain is UvrABC system protein C from Methanothermobacter thermautotrophicus (strain ATCC 29096 / DSM 1053 / JCM 10044 / NBRC 100330 / Delta H) (Methanobacterium thermoautotrophicum).